Consider the following 395-residue polypeptide: DLYTSKGLFRAAVPSGASTGIYEALELRDNDKTRFMGKGVSKAVAHVNKTIAPALISKNISVVEQEKIDRLMLEMDGSENKSKFGANAILGVSLAVCKAGAAEKGVPLYRHIADLAGNPEVILPVPAFNVINGGSHAGNKLAMQEFMILPVGAESFKEAMRIGAEVYHNLKNVIKEKYGKDATNVGDEGGFAPNILENKEALELLKNAINKAGYSDKIVIGMDVAASEFYRDGKYDLDFKSPDDPSRYITPDQLADLYKSFVKNYPVVSIEDPFDQDDWAAWKKFTASVGIQVVGDDLTVTNPKRIAKAVDDKACNCLLLKVNQIGSVTESLQACKLAQSNGWGVMVSHRSGETEDTFIADLVVGLCTGQIKTGAPCRSERLAKYNQILRIEEEL.

The substrate site is built by His-136 and Glu-145. Catalysis depends on Glu-188, which acts as the Proton donor. Mg(2+) contacts are provided by Asp-223, Glu-271, and Asp-296. Substrate contacts are provided by Glu-271 and Asp-296. The active-site Proton acceptor is the Lys-321. Substrate-binding positions include 348–351 (SHRS) and Lys-372.

The protein belongs to the enolase family. Homodimer. Requires Mg(2+) as cofactor.

It is found in the cytoplasm. The enzyme catalyses (2R)-2-phosphoglycerate = phosphoenolpyruvate + H2O. It functions in the pathway carbohydrate degradation; glycolysis; pyruvate from D-glyceraldehyde 3-phosphate: step 4/5. In Alligator mississippiensis (American alligator), this protein is Enolase.